A 295-amino-acid chain; its full sequence is Ribosomal protein L11 methyltransferase (295 aa).

S-adenosyl-L-methionine contacts are provided by Thr-139, Gly-166, Asp-188, and Asn-231.

It belongs to the methyltransferase superfamily. PrmA family.

It localises to the cytoplasm. It catalyses the reaction L-lysyl-[protein] + 3 S-adenosyl-L-methionine = N(6),N(6),N(6)-trimethyl-L-lysyl-[protein] + 3 S-adenosyl-L-homocysteine + 3 H(+). In terms of biological role, methylates ribosomal protein L11. In Cyanothece sp. (strain PCC 7425 / ATCC 29141), this protein is Ribosomal protein L11 methyltransferase.